Consider the following 1071-residue polypeptide: Myosin IF heavy chain (1071 aa).

Residues 40–736 (VGLTDMCFLE…TLFHFEELRQ (697 aa)) enclose the Myosin motor domain. 134–141 (GESGSGKT) contacts ATP. The actin-binding stretch occupies residues 610–632 (INDLIGKLNTCQPHYIRCIKSNE). Residues 739-768 (LPSIVITIQRVWRGYKVRKWYKQELQRLRE) form the IQ domain. The TH1 domain occupies 870–1069 (SRKKEWDCRR…KGNTAIVYYN (200 aa)).

It belongs to the TRAFAC class myosin-kinesin ATPase superfamily. Myosin family. In terms of assembly, myosin I heavy chain is single-headed. Dimer of a heavy and a light chain. Inability to self-assemble into filaments.

In terms of biological role, myosin is a protein that binds to actin and has ATPase activity that is activated by actin. The sequence is that of Myosin IF heavy chain (myoF) from Dictyostelium discoideum (Social amoeba).